Reading from the N-terminus, the 397-residue chain is MAKAKYERSKPHVNIGTIGHVDHGKTTLTAAITTVLANKGFAEAFNYADIDKAPEEKERGITINTAHVEYQTENRHYAHVDCPGHADYVKNMITGAAQMDGAILVVSAADGPMPQTREHILLGSRVGIQYIVVFLNKADMVDDPELLELVEMEVRELLSEYDFPGDDIPVITGSALKALENPTDEEAIKPIMDLMEAVDSYIPTPERATDKPFLMPIEDVFTITGRGTVATGRVEAGVLHVGDEVEIVGLTEEKKKVVVTGIEMFRKLLDEAQAGDNIGALLRGVQRTDIERGQVLSKPNSVHPHTKFVGQVYVLKKEEGGRHTPFFDGYRPQFYFRTTDVTGSIKLPDGMEMVMPGDHIDMNVELITPIAMDEGLRFAIREGGRTVGSGVVTKIVE.

A tr-type G domain is found at 10-206; it reads KPHVNIGTIG…AVDSYIPTPE (197 aa). The segment at 19 to 26 is G1; that stretch reads GHVDHGKT. Residue 19-26 participates in GTP binding; the sequence is GHVDHGKT. Mg(2+) is bound at residue Thr-26. Residues 60–64 are G2; it reads GITIN. Residues 81 to 84 are G3; sequence DCPG. Residues 81–85 and 136–139 contribute to the GTP site; these read DCPGH and NKAD. The tract at residues 136 to 139 is G4; sequence NKAD. Positions 174–176 are G5; sequence SAL.

It belongs to the TRAFAC class translation factor GTPase superfamily. Classic translation factor GTPase family. EF-Tu/EF-1A subfamily. As to quaternary structure, monomer.

The protein resides in the cytoplasm. It catalyses the reaction GTP + H2O = GDP + phosphate + H(+). In terms of biological role, GTP hydrolase that promotes the GTP-dependent binding of aminoacyl-tRNA to the A-site of ribosomes during protein biosynthesis. This is Elongation factor Tu from Clostridium beijerinckii (strain ATCC 51743 / NCIMB 8052) (Clostridium acetobutylicum).